A 202-amino-acid chain; its full sequence is NADH-quinone oxidoreductase subunit B (202 aa).

Positions 1–13 are enriched in polar residues; it reads MSSPTTKFSNAAS. Residues 1 to 32 are disordered; that stretch reads MSSPTTKFSNAASSAGGPRVTPAAASILDPRT. Cysteine 81, cysteine 82, cysteine 146, and cysteine 176 together coordinate [4Fe-4S] cluster.

Belongs to the complex I 20 kDa subunit family. NDH-1 is composed of 14 different subunits. Subunits NuoB, C, D, E, F, and G constitute the peripheral sector of the complex. [4Fe-4S] cluster serves as cofactor.

It localises to the cell inner membrane. The enzyme catalyses a quinone + NADH + 5 H(+)(in) = a quinol + NAD(+) + 4 H(+)(out). NDH-1 shuttles electrons from NADH, via FMN and iron-sulfur (Fe-S) centers, to quinones in the respiratory chain. The immediate electron acceptor for the enzyme in this species is believed to be ubiquinone. Couples the redox reaction to proton translocation (for every two electrons transferred, four hydrogen ions are translocated across the cytoplasmic membrane), and thus conserves the redox energy in a proton gradient. This chain is NADH-quinone oxidoreductase subunit B, found in Nitrobacter hamburgensis (strain DSM 10229 / NCIMB 13809 / X14).